Here is a 165-residue protein sequence, read N- to C-terminus: Protein SprT (165 aa).

The SprT-like domain maps to 20 to 163 (EKLAQANLKL…RCVHCGEQLV (144 aa)). H78 serves as a coordination point for Zn(2+). The active site involves E79. H82 is a binding site for Zn(2+).

Belongs to the SprT family. Zn(2+) is required as a cofactor.

Its subcellular location is the cytoplasm. This is Protein SprT from Escherichia coli O127:H6 (strain E2348/69 / EPEC).